Reading from the N-terminus, the 121-residue chain is Putative iron-sulfur cluster insertion protein ErpA (121 aa).

3 residues coordinate iron-sulfur cluster: Cys-49, Cys-113, and Cys-115.

It belongs to the HesB/IscA family. In terms of assembly, homodimer. The cofactor is iron-sulfur cluster.

Functionally, required for insertion of 4Fe-4S clusters. In Nitrosomonas europaea (strain ATCC 19718 / CIP 103999 / KCTC 2705 / NBRC 14298), this protein is Putative iron-sulfur cluster insertion protein ErpA.